Reading from the N-terminus, the 120-residue chain is uncharacterized protein (120 aa).

The stretch at 45-78 forms a coiled coil; sequence QLISESLKIAQKDLMEVRKELRKRKIAIRETERD.

This is an uncharacterized protein from Bacillus subtilis (strain 168).